Consider the following 245-residue polypeptide: UPF0246 protein LBUL_1917 (245 aa).

The protein belongs to the UPF0246 family.

This Lactobacillus delbrueckii subsp. bulgaricus (strain ATCC BAA-365 / Lb-18) protein is UPF0246 protein LBUL_1917.